A 77-amino-acid polypeptide reads, in one-letter code: DNA-directed RNA polymerase subunit Rpo5 (77 aa).

This sequence belongs to the archaeal Rpo5/eukaryotic RPB5 RNA polymerase subunit family. Part of the RNA polymerase complex.

The protein resides in the cytoplasm. The catalysed reaction is RNA(n) + a ribonucleoside 5'-triphosphate = RNA(n+1) + diphosphate. Its function is as follows. DNA-dependent RNA polymerase (RNAP) catalyzes the transcription of DNA into RNA using the four ribonucleoside triphosphates as substrates. This is DNA-directed RNA polymerase subunit Rpo5 from Methanothermobacter thermautotrophicus (strain ATCC 29096 / DSM 1053 / JCM 10044 / NBRC 100330 / Delta H) (Methanobacterium thermoautotrophicum).